A 157-amino-acid polypeptide reads, in one-letter code: Dihydrofolate reductase type 5 (157 aa).

In terms of domain architecture, DHFR spans 2-156 (KVSLMAAKAK…INYCYQIWQK (155 aa)).

It belongs to the dihydrofolate reductase family. Homodimer.

It carries out the reaction (6S)-5,6,7,8-tetrahydrofolate + NADP(+) = 7,8-dihydrofolate + NADPH + H(+). It participates in cofactor biosynthesis; tetrahydrofolate biosynthesis; 5,6,7,8-tetrahydrofolate from 7,8-dihydrofolate: step 1/1. In terms of biological role, key enzyme in folate metabolism. Catalyzes an essential reaction for de novo glycine and purine synthesis, and for DNA precursor synthesis. The sequence is that of Dihydrofolate reductase type 5 (dhfrV) from Escherichia coli.